Consider the following 262-residue polypeptide: Hydroxyethylthiazole kinase (262 aa).

Met-40 provides a ligand contact to substrate. ATP is bound by residues Lys-116 and Thr-162. Gly-189 contributes to the substrate binding site.

Belongs to the Thz kinase family. The cofactor is Mg(2+).

The enzyme catalyses 5-(2-hydroxyethyl)-4-methylthiazole + ATP = 4-methyl-5-(2-phosphooxyethyl)-thiazole + ADP + H(+). The protein operates within cofactor biosynthesis; thiamine diphosphate biosynthesis; 4-methyl-5-(2-phosphoethyl)-thiazole from 5-(2-hydroxyethyl)-4-methylthiazole: step 1/1. In terms of biological role, catalyzes the phosphorylation of the hydroxyl group of 4-methyl-5-beta-hydroxyethylthiazole (THZ). The sequence is that of Hydroxyethylthiazole kinase from Clostridioides difficile (strain 630) (Peptoclostridium difficile).